The primary structure comprises 68 residues: ATP synthase subunit c (68 aa).

2 helical membrane-spanning segments follow: residues 4–24 (IAAAIAIGLSALGAGIGNGLI) and 45–65 (IMFIGIGLVEALPIIGVVIAF).

It belongs to the ATPase C chain family. As to quaternary structure, F-type ATPases have 2 components, F(1) - the catalytic core - and F(0) - the membrane proton channel. F(1) has five subunits: alpha(3), beta(3), gamma(1), delta(1), epsilon(1). F(0) has three main subunits: a(1), b(2) and c(10-14). The alpha and beta chains form an alternating ring which encloses part of the gamma chain. F(1) is attached to F(0) by a central stalk formed by the gamma and epsilon chains, while a peripheral stalk is formed by the delta and b chains.

The protein resides in the cell membrane. Its function is as follows. F(1)F(0) ATP synthase produces ATP from ADP in the presence of a proton or sodium gradient. F-type ATPases consist of two structural domains, F(1) containing the extramembraneous catalytic core and F(0) containing the membrane proton channel, linked together by a central stalk and a peripheral stalk. During catalysis, ATP synthesis in the catalytic domain of F(1) is coupled via a rotary mechanism of the central stalk subunits to proton translocation. In terms of biological role, key component of the F(0) channel; it plays a direct role in translocation across the membrane. A homomeric c-ring of between 10-14 subunits forms the central stalk rotor element with the F(1) delta and epsilon subunits. This is ATP synthase subunit c from Staphylococcus saprophyticus subsp. saprophyticus (strain ATCC 15305 / DSM 20229 / NCIMB 8711 / NCTC 7292 / S-41).